Here is a 131-residue protein sequence, read N- to C-terminus: Peptidyl-prolyl cis-trans isomerase NIMA-interacting 4 (131 aa).

Residues 1–25 form a necessary for nuclear localization and DNA-binding region; the sequence is MPPKGKSGSGKGGKGKAASGSESSE. Residues 1-37 are disordered; sequence MPPKGKSGSGKGGKGKAASGSESSEKKAQGPKGGGNA. Positions 1–41 are necessary for association with the pre-rRNP complexes; sequence MPPKGKSGSGKGGKGKAASGSESSEKKAQGPKGGGNAVKVR. A Phosphoserine; by CK2 modification is found at serine 19. A PpiC domain is found at 35-129; it reads GNAVKVRHIL…FGYHIIMVEG (95 aa).

It belongs to the PpiC/parvulin rotamase family. PIN4 subfamily. As to quaternary structure, found in pre-ribosomal ribonucleoprotein (pre-rRNP) complexes. Phosphorylated. Phosphorylation occurs both in the nucleus and the cytoplasm. Phosphorylation at Ser-19 does not affect its PPIase activity but is required for nuclear localization, and the dephosphorylation is a prerequisite for the binding to DNA. The unphosphorylated form associates with the pre-rRNP complexes in the nucleus.

It is found in the nucleus. The protein resides in the nucleolus. It localises to the cytoplasm. Its subcellular location is the cytoskeleton. The protein localises to the spindle. It catalyses the reaction [protein]-peptidylproline (omega=180) = [protein]-peptidylproline (omega=0). In terms of biological role, involved as a ribosomal RNA processing factor in ribosome biogenesis. Binds to tightly bent AT-rich stretches of double-stranded DNA. The polypeptide is Peptidyl-prolyl cis-trans isomerase NIMA-interacting 4 (PIN4) (Bos taurus (Bovine)).